The following is a 367-amino-acid chain: Glutamate 5-kinase (367 aa).

An ATP-binding site is contributed by Lys10. The substrate site is built by Ser50, Asp137, and Asn149. Residues 169 to 170 and 211 to 217 each bind ATP; these read TD and TGGMSTK. Residues 275 to 353 enclose the PUA domain; that stretch reads AGEITVDEGA…QEIDAILGYE (79 aa).

This sequence belongs to the glutamate 5-kinase family.

Its subcellular location is the cytoplasm. It catalyses the reaction L-glutamate + ATP = L-glutamyl 5-phosphate + ADP. Its pathway is amino-acid biosynthesis; L-proline biosynthesis; L-glutamate 5-semialdehyde from L-glutamate: step 1/2. Catalyzes the transfer of a phosphate group to glutamate to form L-glutamate 5-phosphate. The chain is Glutamate 5-kinase from Escherichia fergusonii (strain ATCC 35469 / DSM 13698 / CCUG 18766 / IAM 14443 / JCM 21226 / LMG 7866 / NBRC 102419 / NCTC 12128 / CDC 0568-73).